We begin with the raw amino-acid sequence, 524 residues long: Keratin, type II cytoskeletal 71 (524 aa).

Positions 1–130 (MNRQFTCKSG…DPEIQKVRAQ (130 aa)) are head. The coil 1A stretch occupies residues 131-166 (EREQIKALNNKFASFIDKVRFLEQQNQVLETKWELL). The 314-residue stretch at 131–444 (EREQIKALNN…KLLESEECRM (314 aa)) folds into the IF rod domain. A linker 1 region spans residues 167 to 185 (QQLDLNNCKNNLEPILEGY). The segment at 186-277 (ISNLRKQLET…CLYEAEIAQI (92 aa)) is coil 1B. The linker 12 stretch occupies residues 278–301 (QSHISDMSVILSMDNNRDLNLDSI). The coil 2 stretch occupies residues 302–440 (IDEVRAQYEE…ATYRKLLESE (139 aa)). Residues 441 to 524 (ECRMSGEFPS…QSASSKKASR (84 aa)) are tail. The segment at 491–524 (VRGGEGRSRGSTSDYKDTLGKGSSQSASSKKASR) is disordered. Basic and acidic residues predominate over residues 494–509 (GEGRSRGSTSDYKDTL). A compositionally biased stretch (low complexity) spans 510 to 524 (GKGSSQSASSKKASR).

The protein belongs to the intermediate filament family. As to quaternary structure, heterodimer of a type I and a type II keratin. Associates with KRT16 and/or KRT17.

The protein localises to the cytoplasm. The protein resides in the cytoskeleton. In terms of biological role, plays a central role in hair formation. Essential component of keratin intermediate filaments in the inner root sheath (IRS) of the hair follicle. The protein is Keratin, type II cytoskeletal 71 (KRT71) of Felis catus (Cat).